Reading from the N-terminus, the 459-residue chain is MGSYFSLKNSDLHPSCIALPRSAEEVSKAVRTLSLGAHKWEGQCQFGVRGGGHTPFKGAASTDNGIVLDLLHMPSAGISPDYETITVSPSTTWDLVYEVLDAHNRSTLGTKVAGIGVGGASTSCGVSYFSPRYGYICDMVENWEVVLATGDIVNANANENADLWKALRGGINNFGIVTAVTLKAFEQGPFWGGQTFHSIETRQEHFKNHAKLASAHPYDPYAHYINTLVLANGGHWFIGNSIQYTKSDPPVAEPEVFKPFLKTERTPIFPGLPEDTLRVDNVTSFSREYAANTLYPQRWQFACISFAPDADFMETFFQMANDAMQQYVKLPGFKLILNYQPAPTVQLERNGAVDSLGPIQTEGNVVFVHWAVSYDESEAQFDDAITKSVQDLFHAANTKAKELGIYRHFIQPTYADSWQSPFDYRSKSTIEELVATSKKYDPLQVFQKQVPGGFKLPQI.

The FAD-binding PCMH-type domain occupies 10-187 (SDLHPSCIAL…TAVTLKAFEQ (178 aa)).

It belongs to the oxygen-dependent FAD-linked oxidoreductase family.

It functions in the pathway mycotoxin biosynthesis. In terms of biological role, FAD-dependent monooxygenase; part of the gene cluster that mediates the biosynthesis of cercosporin, a light-activated, non-host-selective toxin. The perylenequinone chromophore of cercosporin absorbs light energy to attain an electronically-activated triplet state and produces active oxygen species such as the hydroxyl radical, superoxide, hydrogen peroxide or singlet oxygen upon reaction with oxygen molecules. These reactive oxygen species cause damage to various cellular components including lipids, proteins and nucleic acids. The first step of cercosporin biosynthesis is performed by the polyketide synthase CTB1 which catalyzes the formation of nor-toralactone. The starter unit acyltransferase (SAT) domain of CTB1 initiates polyketide extension by the selective utilization of acetyl-CoA, which is elongated to the heptaketide in the beta-ketoacyl synthase (KS) domain by successive condensations with six malonyl units introduced by the malonyl acyltransferase (MAT) domain. The product template (PT) domain catalyzes C4-C9 and C2-C11 aldol cyclizations and dehydrations to a trihydroxynaphthalene, which is thought to be delivered to the thioesterase (TE) domain for product release. The bifunctional enzyme CTB3 then methylates nor-toralactone to toralactone before conducting an unusual oxidative aromatic ring opening. The O-methyltransferase CTB2 further methylates the nascent OH-6 of the CBT3 product, blocking further oxidation at this site before the reductase CTB6 reduces the 2-oxopropyl ketone at position C7, giving naphthalene. The FAD-dependent monooxygenase CTB5 in concert with the multicopper oxidase CTB12 are responsible for homodimerization of naphthalene with CTB7 installing the dioxepine moiety, finally producing cercosporin. The fasciclin domain-containing protein CTB11 might act with CTB5 and CTB12 whereas the roles of CTB9 and CTB10 have still to be elucidated. The sequence is that of FAD-dependent monooxygenase CTB5 from Cercospora nicotianae (Barn spot disease fungus).